Consider the following 263-residue polypeptide: 5'-nucleotidase SurE (263 aa).

Aspartate 11, aspartate 12, serine 42, and asparagine 96 together coordinate a divalent metal cation.

The protein belongs to the SurE nucleotidase family. It depends on a divalent metal cation as a cofactor.

The protein resides in the cytoplasm. It carries out the reaction a ribonucleoside 5'-phosphate + H2O = a ribonucleoside + phosphate. Nucleotidase that shows phosphatase activity on nucleoside 5'-monophosphates. This chain is 5'-nucleotidase SurE, found in Methanocorpusculum labreanum (strain ATCC 43576 / DSM 4855 / Z).